Here is an 863-residue protein sequence, read N- to C-terminus: Leucine--tRNA ligase (863 aa).

A 'HIGH' region motif is present at residues 42 to 52; it reads PYPSGRLHMGH. The short motif at 622–626 is the 'KMSKS' region element; it reads KMSKS. Lys625 lines the ATP pocket.

This sequence belongs to the class-I aminoacyl-tRNA synthetase family.

The protein resides in the cytoplasm. The catalysed reaction is tRNA(Leu) + L-leucine + ATP = L-leucyl-tRNA(Leu) + AMP + diphosphate. The sequence is that of Leucine--tRNA ligase from Shewanella denitrificans (strain OS217 / ATCC BAA-1090 / DSM 15013).